Reading from the N-terminus, the 100-residue chain is Small ribosomal subunit protein uS14 (100 aa).

The protein belongs to the universal ribosomal protein uS14 family. As to quaternary structure, part of the 30S ribosomal subunit. Contacts proteins S3 and S10.

In terms of biological role, binds 16S rRNA, required for the assembly of 30S particles and may also be responsible for determining the conformation of the 16S rRNA at the A site. This chain is Small ribosomal subunit protein uS14, found in Nostoc sp. (strain PCC 7120 / SAG 25.82 / UTEX 2576).